A 323-amino-acid chain; its full sequence is Methenyltetrahydromethanopterin cyclohydrolase (323 aa).

Belongs to the MCH family.

It localises to the cytoplasm. The enzyme catalyses 5,10-methenyl-5,6,7,8-tetrahydromethanopterin + H2O = N(5)-formyl-5,6,7,8-tetrahydromethanopterin + H(+). It functions in the pathway one-carbon metabolism; methanogenesis from CO(2); 5,10-methenyl-5,6,7,8-tetrahydromethanopterin from CO(2): step 3/3. Catalyzes the reversible interconversion of 5-formyl-H(4)MPT to methenyl-H(4)MPT(+). The sequence is that of Methenyltetrahydromethanopterin cyclohydrolase from Methanococcus maripaludis (strain C7 / ATCC BAA-1331).